We begin with the raw amino-acid sequence, 386 residues long: Succinate--CoA ligase [ADP-forming] subunit beta (386 aa).

The ATP-grasp domain occupies 9-244 (KEILRSYGVS…LDEEDPKEVE (236 aa)). ATP-binding positions include Lys-46, 53–55 (GRG), Glu-99, Cys-102, and Glu-107. Mg(2+) contacts are provided by Asn-199 and Asp-213. Substrate contacts are provided by residues Asn-264 and 321–323 (GIM).

It belongs to the succinate/malate CoA ligase beta subunit family. In terms of assembly, heterotetramer of two alpha and two beta subunits. Requires Mg(2+) as cofactor.

The enzyme catalyses succinate + ATP + CoA = succinyl-CoA + ADP + phosphate. The catalysed reaction is GTP + succinate + CoA = succinyl-CoA + GDP + phosphate. It participates in carbohydrate metabolism; tricarboxylic acid cycle; succinate from succinyl-CoA (ligase route): step 1/1. Functionally, succinyl-CoA synthetase functions in the citric acid cycle (TCA), coupling the hydrolysis of succinyl-CoA to the synthesis of either ATP or GTP and thus represents the only step of substrate-level phosphorylation in the TCA. The beta subunit provides nucleotide specificity of the enzyme and binds the substrate succinate, while the binding sites for coenzyme A and phosphate are found in the alpha subunit. This is Succinate--CoA ligase [ADP-forming] subunit beta from Geobacillus thermodenitrificans (strain NG80-2).